Reading from the N-terminus, the 499-residue chain is Maturase K (499 aa).

Belongs to the intron maturase 2 family. MatK subfamily.

The protein resides in the plastid. It is found in the chloroplast. Usually encoded in the trnK tRNA gene intron. Probably assists in splicing its own and other chloroplast group II introns. The polypeptide is Maturase K (Gymnocladus chinensis (Soap tree)).